Reading from the N-terminus, the 194-residue chain is Putative manganese efflux pump MntP (194 aa).

The next 6 membrane-spanning stretches (helical) occupy residues 3-23 (PFSI…AAIG), 37-57 (LRAG…GWVL), 69-89 (DHWI…IAGL), 110-132 (LGLA…SLAF), 147-167 (CTFS…NLIG), and 172-192 (ILGG…HLGA).

Belongs to the MntP (TC 9.B.29) family.

It localises to the cell inner membrane. Probably functions as a manganese efflux pump. The polypeptide is Putative manganese efflux pump MntP (Xanthomonas oryzae pv. oryzae (strain MAFF 311018)).